Here is a 237-residue protein sequence, read N- to C-terminus: UPF0173 metal-dependent hydrolase BCAN_B0597 (237 aa).

Belongs to the UPF0173 family.

The sequence is that of UPF0173 metal-dependent hydrolase BCAN_B0597 from Brucella canis (strain ATCC 23365 / NCTC 10854 / RM-666).